Here is a 405-residue protein sequence, read N- to C-terminus: BRCA1-A complex subunit Abraxas 1 (405 aa).

The region spanning 7–153 is the MPN domain; the sequence is SALLSGFVFG…CSTYRLEHAL (147 aa). Positions 208 to 262 form a coiled coil; the sequence is SLQEVHKINEMYATLQEELKKMCSDVEVSERSVEKLLTEVSQLKEEINRKKQHKI. A disordered region spans residues 365–405; it reads LHQDEEDCNQETKLALSSAETDEEALENPKDTNEYSYSPTF. Serine 402 is modified (phosphoserine). The pSXXF motif signature appears at 402–405; sequence SPTF.

Belongs to the FAM175 family. Abraxas subfamily. As to quaternary structure, component of the BRCA1-A complex. Component of the BRISC complex. Homodimer. Interacts directly (when phosphorylated at Ser-402) with BRCA1. The phosphorylated homodimer can interact directly with two BRCA1 chains, giving rise to a heterotetramer. Phosphorylation of Ser-402 of the pSXXF motif by ATM or ATR constitutes a specific recognition motif for the BRCT domain of BRCA1.

Its subcellular location is the nucleus. Functionally, involved in DNA damage response and double-strand break (DSB) repair. Component of the BRCA1-A complex, acting as a central scaffold protein that assembles the various components of the complex and mediates the recruitment of BRCA1. The BRCA1-A complex specifically recognizes 'Lys-63'-linked ubiquitinated histones H2A and H2AX at DNA lesion sites, leading to target the BRCA1-BARD1 heterodimer to sites of DNA damage at DSBs. This complex also possesses deubiquitinase activity that specifically removes 'Lys-63'-linked ubiquitin on histones H2A and H2AX. This chain is BRCA1-A complex subunit Abraxas 1, found in Gallus gallus (Chicken).